Reading from the N-terminus, the 682-residue chain is MANSARDILVTCALPYANGAIHLGHLLEHIQADIWVRFQRMRGHKVHFICADDAHGTPIMLNADKLGITPEALIARSKADHVADFEGFNISYDNYHSTHSPENEALTAEMYKKLRANGFIKSRTISQLFDPEKGMFLPDRFVKGTCPKCKAEDQYGDNCEVCSSTYSPTELINPRSVVSGATPVLKESEHFFFDLPAFEGMLKAWIKSGSLQPEIANKMQEWFESGLQQWDISRDAPYFGFKIPDTEDKYFYVWLDAPIGYMASFKNLCDKTGLNFDDFWKKDSSAELYHFIGKDIVYFHSLFWPAMLDGCDLRKPTNVFAHGYVTVNGVKMSKSRGTFIQASTYLRHLAPEYLRYYYAAKLNNRIEDLDLNLEDFVQRLNADVVNKFVNLASRSAGFITKRFDGKLSAEIAEPELLAEFVEKAAQIATYYEEREFGKVVREVMQLADKANKYIDDKAPWVMAKEEGREAELQAVCSMALQLFRVLAIYLKPVIPQIIARAEAFLQDELTWESLNRPLLNHAILPFKALAQRLDPKQIEAIVNETKEQFVAQQALEQKNSAKAEPASQVEPIAETISIEDFAKLDLRVAKVMKCEAVPESNKLLRFELDLGDHTRQVFSGIKEAYNNPAELEGRFVVVIANLAPRKMRFGVSEGMILSAGTGGADLFLLNADQGVKPGMQVK.

Positions 15–25 match the 'HIGH' region motif; the sequence is PYANGAIHLGH. The Zn(2+) site is built by cysteine 146, cysteine 149, cysteine 159, and cysteine 162. Residues 331–335 carry the 'KMSKS' region motif; it reads KMSKS. Residue lysine 334 coordinates ATP. One can recognise a tRNA-binding domain in the interval 580–682; sequence DFAKLDLRVA…QGVKPGMQVK (103 aa).

Belongs to the class-I aminoacyl-tRNA synthetase family. MetG type 1 subfamily. As to quaternary structure, homodimer. Zn(2+) serves as cofactor.

The protein localises to the cytoplasm. The enzyme catalyses tRNA(Met) + L-methionine + ATP = L-methionyl-tRNA(Met) + AMP + diphosphate. Functionally, is required not only for elongation of protein synthesis but also for the initiation of all mRNA translation through initiator tRNA(fMet) aminoacylation. This is Methionine--tRNA ligase from Pasteurella multocida (strain Pm70).